A 486-amino-acid chain; its full sequence is tRNA sulfurtransferase (486 aa).

A THUMP domain is found at 61–165; sequence AILIDVLGRI…NDHMMLIKAR (105 aa). Residues 183-184, Lys-265, Gly-287, and Gln-296 contribute to the ATP site; that span reads LI. A disulfide bridge connects residues Cys-344 and Cys-456. Residues 404–481 enclose the Rhodanese domain; it reads LSANDVILDI…NGFANVRVFA (78 aa). Catalysis depends on Cys-456, which acts as the Cysteine persulfide intermediate.

It belongs to the ThiI family.

It is found in the cytoplasm. The enzyme catalyses [ThiI sulfur-carrier protein]-S-sulfanyl-L-cysteine + a uridine in tRNA + 2 reduced [2Fe-2S]-[ferredoxin] + ATP + H(+) = [ThiI sulfur-carrier protein]-L-cysteine + a 4-thiouridine in tRNA + 2 oxidized [2Fe-2S]-[ferredoxin] + AMP + diphosphate. The catalysed reaction is [ThiS sulfur-carrier protein]-C-terminal Gly-Gly-AMP + S-sulfanyl-L-cysteinyl-[cysteine desulfurase] + AH2 = [ThiS sulfur-carrier protein]-C-terminal-Gly-aminoethanethioate + L-cysteinyl-[cysteine desulfurase] + A + AMP + 2 H(+). It participates in cofactor biosynthesis; thiamine diphosphate biosynthesis. In terms of biological role, catalyzes the ATP-dependent transfer of a sulfur to tRNA to produce 4-thiouridine in position 8 of tRNAs, which functions as a near-UV photosensor. Also catalyzes the transfer of sulfur to the sulfur carrier protein ThiS, forming ThiS-thiocarboxylate. This is a step in the synthesis of thiazole, in the thiamine biosynthesis pathway. The sulfur is donated as persulfide by IscS. The polypeptide is tRNA sulfurtransferase (Mannheimia succiniciproducens (strain KCTC 0769BP / MBEL55E)).